We begin with the raw amino-acid sequence, 688 residues long: Polyribonucleotide nucleotidyltransferase (688 aa).

The Mg(2+) site is built by D484 and D490. In terms of domain architecture, KH spans 550–609 (PTTEIFNVAPDKIVEIIGQGGRVIKEIVEKFEVKIDLNKPSGEVKIMGNKERVLKTKEFI). An S1 motif domain is found at 626 to 688 (DEVLEAQVKR…NKGKIALDLA (63 aa)).

It belongs to the polyribonucleotide nucleotidyltransferase family. The cofactor is Mg(2+).

It localises to the cytoplasm. The enzyme catalyses RNA(n+1) + phosphate = RNA(n) + a ribonucleoside 5'-diphosphate. Its function is as follows. Involved in mRNA degradation. Catalyzes the phosphorolysis of single-stranded polyribonucleotides processively in the 3'- to 5'-direction. This Helicobacter pylori (strain P12) protein is Polyribonucleotide nucleotidyltransferase.